The sequence spans 304 residues: GTP cyclohydrolase FolE2 (304 aa).

The protein belongs to the GTP cyclohydrolase IV family.

The catalysed reaction is GTP + H2O = 7,8-dihydroneopterin 3'-triphosphate + formate + H(+). It functions in the pathway cofactor biosynthesis; 7,8-dihydroneopterin triphosphate biosynthesis; 7,8-dihydroneopterin triphosphate from GTP: step 1/1. Converts GTP to 7,8-dihydroneopterin triphosphate. In Bdellovibrio bacteriovorus (strain ATCC 15356 / DSM 50701 / NCIMB 9529 / HD100), this protein is GTP cyclohydrolase FolE2.